Reading from the N-terminus, the 151-residue chain is Transcriptional regulator MraZ (151 aa).

SpoVT-AbrB domains lie at 5 to 52 and 81 to 124; these read ANAI…PLSE and AVDL…DEDA.

The protein belongs to the MraZ family. In terms of assembly, forms oligomers.

The protein resides in the cytoplasm. It is found in the nucleoid. The chain is Transcriptional regulator MraZ from Pseudomonas syringae pv. tomato (strain ATCC BAA-871 / DC3000).